We begin with the raw amino-acid sequence, 938 residues long: Isoleucine--tRNA ligase (938 aa).

Residues 58-68 (PYANGSIHIGH) carry the 'HIGH' region motif. Residue K183 is modified to N6-acetyllysine. E561 serves as a coordination point for L-isoleucyl-5'-AMP. The 'KMSKS' region signature appears at 602 to 606 (KMSKS). K605 contributes to the ATP binding site. Zn(2+) contacts are provided by C901, C904, C921, and C924.

Belongs to the class-I aminoacyl-tRNA synthetase family. IleS type 1 subfamily. Monomer. The cofactor is Zn(2+).

Its subcellular location is the cytoplasm. It carries out the reaction tRNA(Ile) + L-isoleucine + ATP = L-isoleucyl-tRNA(Ile) + AMP + diphosphate. Functionally, catalyzes the attachment of isoleucine to tRNA(Ile). As IleRS can inadvertently accommodate and process structurally similar amino acids such as valine, to avoid such errors it has two additional distinct tRNA(Ile)-dependent editing activities. One activity is designated as 'pretransfer' editing and involves the hydrolysis of activated Val-AMP. The other activity is designated 'posttransfer' editing and involves deacylation of mischarged Val-tRNA(Ile). The sequence is that of Isoleucine--tRNA ligase from Shigella flexneri.